The following is a 338-amino-acid chain: Cytochrome c biogenesis protein CcsA (338 aa).

A run of 8 helical transmembrane segments spans residues 11–31 (VLLD…YWLA), 39–59 (LLHE…TGLL), 76–96 (ESLF…EAFA), 100–120 (LVGV…SLTL), 145–165 (VMIL…AFLI), 244–264 (LIGL…VWAN), 278–295 (TWSL…HARI), and 305–325 (ATLA…VNFL).

Belongs to the CcmF/CycK/Ccl1/NrfE/CcsA family. May interact with ccs1.

It localises to the cell inner membrane. Functionally, required during biogenesis of c-type cytochromes (cytochrome c6 and cytochrome f) at the step of heme attachment. The chain is Cytochrome c biogenesis protein CcsA from Gloeobacter violaceus (strain ATCC 29082 / PCC 7421).